The sequence spans 231 residues: 7-cyano-7-deazaguanine synthase (231 aa).

Position 8–18 (8–18) interacts with ATP; that stretch reads FSGGQDSTTCL. 4 residues coordinate Zn(2+): C188, C197, C200, and C203.

The protein belongs to the QueC family. Zn(2+) is required as a cofactor.

The enzyme catalyses 7-carboxy-7-deazaguanine + NH4(+) + ATP = 7-cyano-7-deazaguanine + ADP + phosphate + H2O + H(+). It participates in purine metabolism; 7-cyano-7-deazaguanine biosynthesis. Catalyzes the ATP-dependent conversion of 7-carboxy-7-deazaguanine (CDG) to 7-cyano-7-deazaguanine (preQ(0)). The chain is 7-cyano-7-deazaguanine synthase from Shigella dysenteriae serotype 1 (strain Sd197).